Here is an 88-residue protein sequence, read N- to C-terminus: DNA-directed RNA polymerase subunit omega (88 aa).

This sequence belongs to the RNA polymerase subunit omega family. As to quaternary structure, the RNAP catalytic core consists of 2 alpha, 1 beta, 1 beta' and 1 omega subunit. When a sigma factor is associated with the core the holoenzyme is formed, which can initiate transcription.

It catalyses the reaction RNA(n) + a ribonucleoside 5'-triphosphate = RNA(n+1) + diphosphate. Functionally, promotes RNA polymerase assembly. Latches the N- and C-terminal regions of the beta' subunit thereby facilitating its interaction with the beta and alpha subunits. This is DNA-directed RNA polymerase subunit omega from Thermobifida fusca (strain YX).